A 265-amino-acid polypeptide reads, in one-letter code: Apolipoprotein A-I (265 aa).

Residues 1–20 form the signal peptide; sequence METKAVVLTLAVLFLTGSQA. Tandem repeats lie at residues 69 to 90 and 91 to 112. Positions 69–265 are 10 X approximate tandem repeats; that stretch reads LKILDNWDTL…DEATKKLNSQ (197 aa). The 3; half-length repeat unit spans residues 113–123; sequence KDLEELKQKVQ. 5 consecutive repeat copies span residues 124–145, 146–167, 168–189, 190–209, and 210–230. M195 is modified (methionine sulfoxide). Residues 231-241 form a 9; half-length repeat; sequence PALEDFRQGLM. Residue M241 is modified to Methionine sulfoxide. Repeat 10 spans residues 242–265; the sequence is PVLEGFQKSVLAALDEATKKLNSQ.

Belongs to the apolipoprotein A1/A4/E family. In terms of assembly, homodimer. Interacts with APOA1BP and CLU. Component of a sperm activating protein complex (SPAP), consisting of APOA1, an immunoglobulin heavy chain, an immunoglobulin light chain and albumin. Interacts with NDRG1. Interacts with SCGB3A2. Interacts with NAXE and YJEFN3. In terms of processing, glycosylated. Palmitoylated. Post-translationally, phosphorylation sites are present in the extracellular medium. As to expression, major protein of plasma HDL, also found in chylomicrons.

Its subcellular location is the secreted. Functionally, participates in the reverse transport of cholesterol from tissues to the liver for excretion by promoting cholesterol efflux from tissues and by acting as a cofactor for the lecithin cholesterol acyltransferase (LCAT). As part of the SPAP complex, activates spermatozoa motility. This is Apolipoprotein A-I (APOA1) from Orycteropus afer (Aardvark).